Here is a 229-residue protein sequence, read N- to C-terminus: Large ribosomal subunit protein uL1 (229 aa).

Belongs to the universal ribosomal protein uL1 family. In terms of assembly, part of the 50S ribosomal subunit.

Binds directly to 23S rRNA. The L1 stalk is quite mobile in the ribosome, and is involved in E site tRNA release. Functionally, protein L1 is also a translational repressor protein, it controls the translation of the L11 operon by binding to its mRNA. The sequence is that of Large ribosomal subunit protein uL1 from Streptococcus uberis (strain ATCC BAA-854 / 0140J).